Here is a 62-residue protein sequence, read N- to C-terminus: Short neurotoxin 3 (62 aa).

Cystine bridges form between C3–C24, C17–C41, C43–C54, and C55–C60.

Belongs to the three-finger toxin family. Short-chain subfamily. Type I alpha-neurotoxin sub-subfamily. As to expression, expressed by the venom gland.

Its subcellular location is the secreted. Binds to muscle nicotinic acetylcholine receptor (nAChR) and inhibit acetylcholine from binding to the receptor, thereby impairing neuromuscular transmission. This is Short neurotoxin 3 from Naja mossambica (Mozambique spitting cobra).